The following is a 785-amino-acid chain: Endonuclease MutS2 (785 aa).

335 to 342 (GPNTGGKT) contacts ATP. The Smr domain maps to 710–785 (LDLRGERYED…GNGVTIVEFK (76 aa)).

The protein belongs to the DNA mismatch repair MutS family. MutS2 subfamily. In terms of assembly, homodimer. Binds to stalled ribosomes, contacting rRNA.

In terms of biological role, endonuclease that is involved in the suppression of homologous recombination and thus may have a key role in the control of bacterial genetic diversity. Acts as a ribosome collision sensor, splitting the ribosome into its 2 subunits. Detects stalled/collided 70S ribosomes which it binds and splits by an ATP-hydrolysis driven conformational change. Acts upstream of the ribosome quality control system (RQC), a ribosome-associated complex that mediates the extraction of incompletely synthesized nascent chains from stalled ribosomes and their subsequent degradation. Probably generates substrates for RQC. The polypeptide is Endonuclease MutS2 (Listeria monocytogenes serotype 4b (strain F2365)).